A 277-amino-acid polypeptide reads, in one-letter code: 4-hydroxy-tetrahydrodipicolinate reductase (277 aa).

Residues 11 to 16 and 110 to 112 contribute to the NAD(+) site; these read GALGRM and GTT. Histidine 166 (proton donor/acceptor) is an active-site residue. Histidine 167 contributes to the (S)-2,3,4,5-tetrahydrodipicolinate binding site. The active-site Proton donor is the lysine 170. Residue 176–177 participates in (S)-2,3,4,5-tetrahydrodipicolinate binding; it reads GT.

This sequence belongs to the DapB family.

The protein localises to the cytoplasm. The enzyme catalyses (S)-2,3,4,5-tetrahydrodipicolinate + NAD(+) + H2O = (2S,4S)-4-hydroxy-2,3,4,5-tetrahydrodipicolinate + NADH + H(+). It catalyses the reaction (S)-2,3,4,5-tetrahydrodipicolinate + NADP(+) + H2O = (2S,4S)-4-hydroxy-2,3,4,5-tetrahydrodipicolinate + NADPH + H(+). It participates in amino-acid biosynthesis; L-lysine biosynthesis via DAP pathway; (S)-tetrahydrodipicolinate from L-aspartate: step 4/4. Functionally, catalyzes the conversion of 4-hydroxy-tetrahydrodipicolinate (HTPA) to tetrahydrodipicolinate. This chain is 4-hydroxy-tetrahydrodipicolinate reductase, found in Parasynechococcus marenigrum (strain WH8102).